Here is a 962-residue protein sequence, read N- to C-terminus: CRACD-like protein (962 aa).

Disordered stretches follow at residues 38–102, 131–174, and 212–871; these read GKKK…PESG, NVKM…HDVG, and PAES…QEPV. Polar residues predominate over residues 46 to 61; it reads PSSTGSSTWKQSQTRN. At S92 the chain carries Phosphoserine. Residues 224 to 244 are compositionally biased toward basic residues; the sequence is AKHKLQVKPRNQRSSKMRRLS. The segment covering 245–256 has biased composition (polar residues); sequence SRAQSESLSDLT. A compositionally biased stretch (basic and acidic residues) spans 266-278; sequence EKPLLEVSPEERP. 2 stretches are compositionally biased toward pro residues: residues 292 to 303 and 354 to 365; these read EPGPPAPLPPPG and PPSPPEGPPNPG. Low complexity predominate over residues 407 to 425; it reads PEGDTTPPETDPAATSEAP. Basic and acidic residues-rich tracts occupy residues 429 to 440 and 459 to 480; these read DGPERSVPKEAE and EPEREAETEPERGAGTEPERIG. Phosphoserine is present on S490. Residues 503–521 show a composition bias toward low complexity; the sequence is AAASEGPAASPPLAAAESP. 4 stretches are compositionally biased toward basic and acidic residues: residues 536–546, 555–570, 631–642, and 709–728; these read APERPKAERAE, AAPERKAERGGAELRG, KLAERGPQDSGD, and YSAEVRLERSLTVLPKEEKC. Positions 753 to 764 are enriched in pro residues; that stretch reads PEPLSSKPPLPR. 2 stretches are compositionally biased toward basic and acidic residues: residues 784 to 806 and 844 to 869; these read PGEREPRKEPRTAEKRPLRRGAE and QEDKPGARTLKSEPGKQAKVPERGQE.

The polypeptide is CRACD-like protein (Homo sapiens (Human)).